The primary structure comprises 775 residues: Phenylalanine--tRNA ligase beta subunit (775 aa).

The 109-residue stretch at 39 to 147 (GIDLDGVVFG…EDFKPGTDAN (109 aa)) folds into the tRNA-binding domain. A B5 domain is found at 394 to 470 (YKPKKVFLPQ…RVKGYEHYTS (77 aa)). Mg(2+) contacts are provided by D448, D454, E457, and E458. One can recognise an FDX-ACB domain in the interval 681–774 (AKFPPVVRDI…LKEKYGVELR (94 aa)).

Belongs to the phenylalanyl-tRNA synthetase beta subunit family. Type 1 subfamily. As to quaternary structure, tetramer of two alpha and two beta subunits. Mg(2+) is required as a cofactor.

It is found in the cytoplasm. It carries out the reaction tRNA(Phe) + L-phenylalanine + ATP = L-phenylalanyl-tRNA(Phe) + AMP + diphosphate + H(+). This is Phenylalanine--tRNA ligase beta subunit (pheT) from Aquifex aeolicus (strain VF5).